We begin with the raw amino-acid sequence, 436 residues long: Serine--tRNA ligase (436 aa).

L-serine is bound at residue 241 to 243 (TSE). Residue 272–274 (RAE) participates in ATP binding. Glu-295 is an L-serine binding site. Position 359–362 (359–362 (EISS)) interacts with ATP. Ser-395 is a binding site for L-serine.

This sequence belongs to the class-II aminoacyl-tRNA synthetase family. Type-1 seryl-tRNA synthetase subfamily. Homodimer. The tRNA molecule binds across the dimer.

Its subcellular location is the cytoplasm. It catalyses the reaction tRNA(Ser) + L-serine + ATP = L-seryl-tRNA(Ser) + AMP + diphosphate + H(+). The catalysed reaction is tRNA(Sec) + L-serine + ATP = L-seryl-tRNA(Sec) + AMP + diphosphate + H(+). Its pathway is aminoacyl-tRNA biosynthesis; selenocysteinyl-tRNA(Sec) biosynthesis; L-seryl-tRNA(Sec) from L-serine and tRNA(Sec): step 1/1. Catalyzes the attachment of serine to tRNA(Ser). Is also able to aminoacylate tRNA(Sec) with serine, to form the misacylated tRNA L-seryl-tRNA(Sec), which will be further converted into selenocysteinyl-tRNA(Sec). The polypeptide is Serine--tRNA ligase (Beijerinckia indica subsp. indica (strain ATCC 9039 / DSM 1715 / NCIMB 8712)).